The following is a 443-amino-acid chain: MDEEIDTRKINNSFLRDHNYATEADIISTVEFNPTGELLATGDKGGRVVVFQREQESKSQPHRRGEYNVYSTFQSHEPEFDYLKSLEIEEKINKIRWLPRQNAAYFPLSTNDKTVKLWKISERDKRPEGYNLKDEEGRIRDPTTITTLRVPVLRPMDLMVEATPRRIFSNAHTYHINSISVNSDYETYMSTDDLRINLWNLEITNRSFNIVDIKPANMEELTEVITAAEFHPNQCNTFVYSSSKGSIRLCDMRTSALCDNHSKLFEEPEDPSNRSFFSEIISSISDVKFSHSGRYLMTRDYLTVKVWDINMESKPLETYQVHDYLRSKLCSLYENDCIFDKFECVWNGTDSVLMTGSYNNFFRMFDRNTKRDVTLEASRENSKPRAILKPRKVCIGGKRRKDEISVDSLDFSKKILHTAWHPNENIIAVAATNNLYIFQDKVN.

WD repeat units lie at residues 22 to 61, 87 to 128, 171 to 209, 220 to 260, 279 to 317, 334 to 375, and 410 to 443; these read TEADIISTVEFNPTGELLATGDKGGRVVVFQREQESKSQP, EIEE…KRPE, AHTYHINSISVNSDYETYMSTDDLRINLWNLEITNRSFN, ELTE…LCDN, EIISSISDVKFSHSGRYLMTRDYLTVKVWDINMESKPLE, ENDC…DVTL, and DFSKKILHTAWHPNENIIAVAATNNLYIFQDKVN.

It belongs to the phosphatase 2A regulatory subunit B family. PP2A consists of a common heterodimeric core enzyme, composed of a 36 kDa catalytic subunit (subunit C) and a 65 kDa constant regulatory subunit (PR65 or subunit A), that associates with a variety of regulatory subunits.

It localises to the cytoplasm. Its subcellular location is the cytoskeleton. The protein localises to the membrane. Functionally, the B regulatory subunit might modulate substrate selectivity and catalytic activity, and might also direct the localization of the catalytic enzyme to a particular subcellular compartment. This chain is Serine/threonine-protein phosphatase 2A 55 kDa regulatory subunit B beta isoform (ppp2r2b), found in Carassius auratus (Goldfish).